A 1621-amino-acid chain; its full sequence is Ferredoxin-dependent glutamate synthase, chloroplastic (1621 aa).

A chloroplast-targeting transit peptide spans 1-57; sequence MALQSAPKLLYSSPSPSVFSANERRVAFSDFVGLSKKRSRRRRIAGTFRNFPALSAV. The active-site Nucleophile is C105. The Glutamine amidotransferase type-2 domain maps to 105–504; the sequence is CGVGFIANLD…PGMMISVDLS (400 aa). 1183-1240 serves as a coordination point for FMN; that stretch reads LSETHQTLISNGLRERVILRVDGGLKCGVDVMMAAAMGADEYGFGSLAMIATGCVMAR. [3Fe-4S] cluster is bound by residues C1236, C1242, and C1247.

Belongs to the glutamate synthase family. Interacts with ferredoxin. Interacts (via FMN-binding domain) with SQD1. Requires [3Fe-4S] cluster as cofactor. The cofactor is FMN. In terms of tissue distribution, expressed in young leaves. Not detected in mature leaves.

The protein localises to the plastid. It localises to the chloroplast stroma. The catalysed reaction is 2 oxidized [2Fe-2S]-[ferredoxin] + 2 L-glutamate = L-glutamine + 2 reduced [2Fe-2S]-[ferredoxin] + 2-oxoglutarate + 2 H(+). The protein operates within amino-acid biosynthesis; L-glutamate biosynthesis via GLT pathway; L-glutamate from 2-oxoglutarate and L-glutamine (ferredoxin route): step 1/1. Its pathway is energy metabolism; nitrogen metabolism. With respect to regulation, inhibited by N-bromosuccinimide, which is specific for modification of tryptophan residues probably involved in the electron transfer from ferredoxin. Its function is as follows. Catalyzes the reductive conversion of 2-oxoglutarate plus glutamine to two molecules of glutamate, using reduced ferredoxin as the electron donor. Contains one FMN but no FAD. The FMN-binding domain is also involved in the delivery of sulfite to the reaction center of SQD1. The chain is Ferredoxin-dependent glutamate synthase, chloroplastic from Spinacia oleracea (Spinach).